Here is a 151-residue protein sequence, read N- to C-terminus: Large ribosomal subunit protein uL13 (151 aa).

The disordered stretch occupies residues 126–151; it reads YPGSNHPHEAQKPEKLTIQTIPGGER. Positions 131-140 are enriched in basic and acidic residues; that stretch reads HPHEAQKPEK.

Belongs to the universal ribosomal protein uL13 family. As to quaternary structure, part of the 50S ribosomal subunit.

Its function is as follows. This protein is one of the early assembly proteins of the 50S ribosomal subunit, although it is not seen to bind rRNA by itself. It is important during the early stages of 50S assembly. The chain is Large ribosomal subunit protein uL13 from Trichodesmium erythraeum (strain IMS101).